The primary structure comprises 319 residues: Nucleotide-binding protein Mvan_2698 (319 aa).

The segment covering 1-12 (MTEQGMHQELRE) has biased composition (basic and acidic residues). Residues 1-26 (MTEQGMHQELREGAGTAGDEGGLEAA) are disordered. Residue 43 to 50 (GLSGAGRG) participates in ATP binding. GTP is bound at residue 94 to 97 (DVRS).

The protein belongs to the RapZ-like family.

Displays ATPase and GTPase activities. The polypeptide is Nucleotide-binding protein Mvan_2698 (Mycolicibacterium vanbaalenii (strain DSM 7251 / JCM 13017 / BCRC 16820 / KCTC 9966 / NRRL B-24157 / PYR-1) (Mycobacterium vanbaalenii)).